The sequence spans 293 residues: N-acetylneuraminate lyase (293 aa).

Aceneuramate contacts are provided by Ser48 and Ser49. Tyr137 serves as the catalytic Proton donor. Lys165 serves as the catalytic Schiff-base intermediate with substrate. The aceneuramate site is built by Thr167, Gly189, Asp191, Glu192, and Ser208.

This sequence belongs to the DapA family. NanA subfamily. As to quaternary structure, homotetramer.

It is found in the cytoplasm. It carries out the reaction aceneuramate = aldehydo-N-acetyl-D-mannosamine + pyruvate. Its pathway is amino-sugar metabolism; N-acetylneuraminate degradation; D-fructose 6-phosphate from N-acetylneuraminate: step 1/5. In terms of biological role, catalyzes the reversible aldol cleavage of N-acetylneuraminic acid (sialic acid; Neu5Ac) to form pyruvate and N-acetylmannosamine (ManNAc) via a Schiff base intermediate. The protein is N-acetylneuraminate lyase of Staphylococcus aureus (strain MRSA252).